The primary structure comprises 55 residues: UPF0434 protein BARBAKC583_1098 (55 aa).

The protein belongs to the UPF0434 family.

This chain is UPF0434 protein BARBAKC583_1098, found in Bartonella bacilliformis (strain ATCC 35685 / KC583 / Herrer 020/F12,63).